The primary structure comprises 721 residues: Far upstream element-binding protein 2 (721 aa).

A disordered region spans residues 1-148 (MSDYSTGGPP…HPPPRTSMTE (148 aa)). S2 carries the N-acetylserine modification. The segment covering 8–17 (GPPPGPPPPA) has biased composition (pro residues). Composition is skewed to gly residues over residues 18 to 28 (GGGGGAAGAGG) and 36 to 69 (GAGD…GGPG). R40 is modified (omega-N-methylarginine). An N6-acetyllysine modification is found at K88. Phosphothreonine is present on T101. The span at 111–123 (RQLEDGDQPDSKK) shows a compositional bias: basic and acidic residues. K122 is covalently cross-linked (Glycyl lysine isopeptide (Lys-Gly) (interchain with G-Cter in SUMO1); alternate). Residue K122 forms a Glycyl lysine isopeptide (Lys-Gly) (interchain with G-Cter in SUMO2); alternate linkage. Phosphoserine is present on residues S126, S130, S182, S185, S194, and S275. KH domains are found at residues 145–209 (SMTE…KMML), 234–300 (GTVQ…CEMV), and 323–387 (GGGI…ARII). A disordered region spans residues 394–422 (LRSGPPGPPGAPGMPPGGRGRGRGQGNWG). Residues 398–408 (PPGPPGAPGMP) show a composition bias toward pro residues. Residues 409–422 (PGGRGRGRGQGNWG) show a composition bias toward gly residues. 4 positions are modified to omega-N-methylarginine: R412, R414, R416, and R443. Residues 425 to 492 (GGEMTFSIPT…QQIDHAKQLI (68 aa)) form the KH 4 domain. S481 is modified (phosphoserine). Positions 498-570 (GPLCPVGPGP…HDPNKAAAAA (73 aa)) are disordered. 2 stretches are compositionally biased toward pro residues: residues 502 to 521 (PVGP…PFHP) and 529 to 543 (PGAP…PHQY). Repeat unit 1 spans residues 572-583 (DPNAAWAAYYSH). The segment at 572–685 (DPNAAWAAYY…SAAWAEYYRQ (114 aa)) is 4 X 12 AA imperfect repeats. The segment covering 588–614 (PPGPVPGPAPAPAAPPAQGEPPQPPPT) has biased composition (pro residues). Disordered regions lie at residues 588-650 (PPGP…KAWE), 659-678 (VATG…YSAA), and 688-721 (AYYG…ELHL). 3 repeat units span residues 618–629 (DYTKAWEEYYKK), 644–655 (DYTKAWEEYYKK), and 674–685 (DYSAAWAEYYRQ).

The protein belongs to the KHSRP family. As to quaternary structure, part of a ternary complex containing FUBP2, PTBP1, PTBP2 and HNRPH1. Interacts with PARN. Interacts with PQBP1.

The protein localises to the nucleus. It localises to the cytoplasm. Its function is as follows. Part of a ternary complex that binds to the downstream control sequence (DCS) of the pre-mRNA. Mediates exon inclusion in transcripts that are subject to tissue-specific alternative splicing. May interact with single-stranded DNA from the far-upstream element (FUSE). May activate gene expression. Also involved in degradation of inherently unstable mRNAs that contain AU-rich elements (AREs) in their 3'-UTR, possibly by recruiting degradation machinery to ARE-containing mRNAs. Binds to the dendritic targeting element and may play a role in mRNA trafficking. The chain is Far upstream element-binding protein 2 (Khsrp) from Rattus norvegicus (Rat).